A 447-amino-acid chain; its full sequence is N-succinylarginine dihydrolase (447 aa).

Substrate is bound by residues 19–28 (AGLSFGNEAS), Asn110, and 137–138 (HR). The active site involves Glu174. Arg212 provides a ligand contact to substrate. The active site involves His248. The substrate site is built by Asp250 and Asn359. The active-site Nucleophile is Cys365.

Belongs to the succinylarginine dihydrolase family. Homodimer.

It catalyses the reaction N(2)-succinyl-L-arginine + 2 H2O + 2 H(+) = N(2)-succinyl-L-ornithine + 2 NH4(+) + CO2. It functions in the pathway amino-acid degradation; L-arginine degradation via AST pathway; L-glutamate and succinate from L-arginine: step 2/5. In terms of biological role, catalyzes the hydrolysis of N(2)-succinylarginine into N(2)-succinylornithine, ammonia and CO(2). This Escherichia coli O6:K15:H31 (strain 536 / UPEC) protein is N-succinylarginine dihydrolase.